A 309-amino-acid chain; its full sequence is Olfactory receptor 4A47 (309 aa).

The Extracellular portion of the chain corresponds to 1–23 (MEPRKNVTDFVLLGFTQNPKEQK). Asn6 carries N-linked (GlcNAc...) asparagine glycosylation. A helical membrane pass occupies residues 24-47 (VLFVMFLLFYILTMVGNLLIVVTV). Topologically, residues 48 to 55 (TVSETLGS) are cytoplasmic. Residues 56 to 77 (PMYFFLAGLSFIDIIYSSSISP) traverse the membrane as a helical segment. The Extracellular portion of the chain corresponds to 78-98 (RLISGLFFGNNSISFQSCMAQ). Asn87 carries N-linked (GlcNAc...) asparagine glycosylation. Cys95 and Cys187 form a disulfide bridge. A helical transmembrane segment spans residues 99–118 (LFIEHIFGGSEVFLLLVMAY). Residues 119 to 137 (DCYVAICKPLHYLVIMRQW) are Cytoplasmic-facing. The chain crosses the membrane as a helical span at residues 138–156 (VCVVLLVVSWVGGFLHSVF). Residues 157-193 (QLSIIYGLPFCGPNVIDHFFCDMYPLLKLVCTDTHAI) are Extracellular-facing. Residues 194–217 (GLLVVANGGLACTIVFLLLLISYG) traverse the membrane as a helical segment. Residues 218-233 (VILHSLKNLSQKGRQK) lie on the Cytoplasmic side of the membrane. Residues 234–256 (ALSTCSSHMTVVVFFFVPCIFMY) traverse the membrane as a helical segment. Over 257–267 (ARPARTFPIDK) the chain is Extracellular. Residues 268-287 (SVSVFYTVITPMLNPLIYTL) form a helical membrane-spanning segment. The Cytoplasmic segment spans residues 288 to 309 (RNSEMTSAMKKLWRRDLISSST).

Belongs to the G-protein coupled receptor 1 family.

It localises to the cell membrane. Its function is as follows. Odorant receptor. This Homo sapiens (Human) protein is Olfactory receptor 4A47 (OR4A47).